Reading from the N-terminus, the 188-residue chain is MTIMSDKWIKDAVIKQSMIRPFAEKQVRVHNKEKIISYGLSSYGYDARVSNEFKIFTNINSTTVDPKNFSEDNLVDREVDECIIPPNSFALGRTIEYFKIPRDVLVICVGKSTYARCGIIVNVTPLEPEWEGHVTLEFSNTTPLPAKIYANEGACQFLFLKSDQICDTSYAERQGKYMKQVGVTLPLT.

DCTP-binding positions include 111–116 (KSTYAR), 135–137 (TLE), Gln-156, Tyr-170, Lys-179, and Gln-180. Glu-137 functions as the Proton donor/acceptor in the catalytic mechanism.

Belongs to the dCTP deaminase family. In terms of assembly, homotrimer.

It carries out the reaction dCTP + H2O + H(+) = dUTP + NH4(+). Its pathway is pyrimidine metabolism; dUMP biosynthesis; dUMP from dCTP (dUTP route): step 1/2. Functionally, catalyzes the deamination of dCTP to dUTP. This Rickettsia typhi (strain ATCC VR-144 / Wilmington) protein is dCTP deaminase.